The chain runs to 300 residues: Fatty acid hydroxylase uhd1 (300 aa).

Residues 14–20 (GANGFVG), arginine 39, 63–64 (DL), 83–85 (VAS), tyrosine 156, lysine 160, 183–186 (PVYI), and serine 199 each bind NADP(+). Catalysis depends on lysine 160, which acts as the Proton donor.

It belongs to the NAD(P)-dependent epimerase/dehydratase family. Dihydroflavonol-4-reductase subfamily.

It participates in secondary metabolite biosynthesis. Functionally, fatty acid hydroxylase; part of the gene cluster that mediates the biosynthesis of the glycolipid biosurfactant ustilagic acid (UA). UA is a secreted cellobiose glycolipid that is toxic for many microorganisms and confers biocontrol activity to U.maydis. UA consists of 15,16-dihydroxypalmitic or 2,15,16-trihydroxypalmitic acid, which is O-glycosidically linked to cellobiose at its terminal hydroxyl group. In addition, the cellobiose moiety is acetylated and acylated with a short-chain hydroxy fatty acid. UA biosynthesis starts with omega-hydroxylation of palmitic acid catalyzed by the cytochrome P450 monooxygenase cyp1. Terminal hydroxylation of palmitic acid precedes subterminal hydroxylation catalyzed by the cytochrome P450 monooxygenase cyp2. Sequential glucosylation of the hydroxy fatty acid is probably catalyzed by the glycosyltransferase ugt1. The cellobiose lipid is further decorated by acetylation of the proximal glucose residue and by acylation with a short-chain beta-hydroxy fatty acid at the distal glucose residue. The acyltransferase uat1 may be a good candidate for catalyzing either acetylation or acylation of the cellobiose lipid. The fatty acid synthase fas2 may be involved in synthesis of the carbon backbone of the short-chain beta-hydroxy fatty acid esterified to the cellobiose disaccharide. The secreted UA consists of a mixture of both alpha-hydroxylated and non-hydroxylated glycolipids; therefore, alpha-hydroxylation of the long-chain fatty, catalyzed by the fatty acid hydroxylase ahd1, occurs late in UA biosynthesis and may be the last step before secretion. The chain is Fatty acid hydroxylase uhd1 from Mycosarcoma maydis (Corn smut fungus).